The sequence spans 98 residues: Integration host factor subunit beta (98 aa).

The protein belongs to the bacterial histone-like protein family. In terms of assembly, heterodimer of an alpha and a beta chain.

In terms of biological role, this protein is one of the two subunits of integration host factor, a specific DNA-binding protein that functions in genetic recombination as well as in transcriptional and translational control. This chain is Integration host factor subunit beta, found in Pseudomonas fluorescens (strain SBW25).